A 729-amino-acid polypeptide reads, in one-letter code: Methionine--tRNA ligase (729 aa).

The short motif at 12-22 (PYVNNIPHLGN) is the 'HIGH' region element. Zn(2+) is bound by residues cysteine 143, cysteine 146, cysteine 155, and cysteine 158. Positions 330–334 (KFSKS) match the 'KMSKS' region motif. Lysine 333 contacts ATP. A tRNA-binding domain is found at 565–670 (FSEQVCLKVV…DNPIPGERII (106 aa)).

The protein belongs to the class-I aminoacyl-tRNA synthetase family. MetG type 1 subfamily. In terms of assembly, homodimer. Zn(2+) serves as cofactor.

It is found in the cytoplasm. The enzyme catalyses tRNA(Met) + L-methionine + ATP = L-methionyl-tRNA(Met) + AMP + diphosphate. In terms of biological role, is required not only for elongation of protein synthesis but also for the initiation of all mRNA translation through initiator tRNA(fMet) aminoacylation. The sequence is that of Methionine--tRNA ligase from Borrelia hermsii (strain HS1 / DAH).